The chain runs to 129 residues: uncharacterized protein (129 aa).

This is an uncharacterized protein from Mycoplasma pneumoniae (strain ATCC 29342 / M129 / Subtype 1) (Mycoplasmoides pneumoniae).